A 498-amino-acid polypeptide reads, in one-letter code: Myocyte-specific enhancer factor 2D homolog (498 aa).

Positions 1-100 (MGRKKIQIQR…KGFNGCDSPE (100 aa)) are interaction with hdac9. The region spanning 3-57 (RKKIQIQRITDERNRQVTFTKRKFGLMKKAYELSVLCDCEIALIIFNHSNKLFQY) is the MADS-box domain. Residues 58-86 (ASTDMDKVLLKYTEYNEPHESRTNADIIE) constitute a DNA-binding region (mef2-type). 3 disordered regions span residues 173–215 (LTDP…NSNG), 243–267 (LGKV…NSRK), and 411–498 (SIKR…AWVT). Basic and acidic residues predominate over residues 412–424 (IKREPASPNRERS). Polar residues-rich tracts occupy residues 425 to 434 (TGTPLSCFSH) and 447 to 457 (DSLSSNASSFE).

The protein belongs to the MEF2 family. Binds DNA as a multimer, probably as a dimer. Interacts with hdac9. In terms of tissue distribution, restricted to the somitic mesoderm of early embryos and to the body muscle (myotomes) of the tadpole. Expressed in all tissues examined in the adult.

It is found in the nucleus. Functionally, may regulate muscle-specific transcription in the embryo and may regulate transcription of a variety of cell types in the adult. It binds to the sequence 5'-CTA[TA]4TAR-3'. The polypeptide is Myocyte-specific enhancer factor 2D homolog (mef2d) (Xenopus laevis (African clawed frog)).